The chain runs to 294 residues: MTKRRSTSRGPGRILGILGHPVAHSASPAMHNAAFAAQGMHAMYGAFDVPPSQLEKAIAGIRALGLLGVNVTIPHKEAVMAYLDDVAPTARQVGAVNTIVNRGGRLIGYNTDGWGFLLSLEERGVRVAGRNAVVLGAGGAARAVALHLGMAGVARLTIINRSRQRAEFLAADLARAKTPVRAEVADPGSEEARAALAEAGLVVNCTPLGMEPDTESTPLEDVGLLPAHCVVYDTVYRPLETRLLREARQHGLITVNGLAMLVHQGACAWEYWFGRRGPVDVMRTAALAALEGQP.

Residues Ser-25 to Ser-27 and Thr-72 each bind shikimate. The active-site Proton acceptor is Lys-76. 2 residues coordinate shikimate: Asn-97 and Asp-112. NADP(+) is bound by residues Gly-136–Ala-140 and Thr-234. Shikimate is bound at residue Tyr-236. Gly-257 contributes to the NADP(+) binding site.

The protein belongs to the shikimate dehydrogenase family. As to quaternary structure, homodimer.

The enzyme catalyses shikimate + NADP(+) = 3-dehydroshikimate + NADPH + H(+). Its pathway is metabolic intermediate biosynthesis; chorismate biosynthesis; chorismate from D-erythrose 4-phosphate and phosphoenolpyruvate: step 4/7. In terms of biological role, involved in the biosynthesis of the chorismate, which leads to the biosynthesis of aromatic amino acids. Catalyzes the reversible NADPH linked reduction of 3-dehydroshikimate (DHSA) to yield shikimate (SA). This chain is Shikimate dehydrogenase (NADP(+)), found in Symbiobacterium thermophilum (strain DSM 24528 / JCM 14929 / IAM 14863 / T).